We begin with the raw amino-acid sequence, 449 residues long: tRNA (guanine(37)-N(1))-methyltransferase (449 aa).

S-adenosyl-L-methionine is bound by residues His216, 254-255 (DL), 282-283 (DG), and Asn345.

The protein belongs to the class I-like SAM-binding methyltransferase superfamily. TRM5/TYW2 family. In terms of assembly, monomer.

It is found in the mitochondrion matrix. The protein resides in the nucleus. Its subcellular location is the cytoplasm. The enzyme catalyses guanosine(37) in tRNA + S-adenosyl-L-methionine = N(1)-methylguanosine(37) in tRNA + S-adenosyl-L-homocysteine + H(+). Its function is as follows. Specifically methylates the N1 position of guanosine-37 in various cytoplasmic and mitochondrial tRNAs. Methylation is not dependent on the nature of the nucleoside 5' of the target nucleoside. This is the first step in the biosynthesis of wybutosine (yW), a modified base adjacent to the anticodon of tRNAs and required for accurate decoding. This Candida albicans (strain SC5314 / ATCC MYA-2876) (Yeast) protein is tRNA (guanine(37)-N(1))-methyltransferase.